Consider the following 489-residue polypeptide: Ubiquitin carboxyl-terminal hydrolase 14 (489 aa).

One can recognise a USP domain in the interval C102 to R458. C111 serves as the catalytic Nucleophile. Residue H409 is the Proton acceptor of the active site. The interval P467–Q489 is disordered.

This sequence belongs to the peptidase C19 family. USP14/UBP6 subfamily.

It carries out the reaction Thiol-dependent hydrolysis of ester, thioester, amide, peptide and isopeptide bonds formed by the C-terminal Gly of ubiquitin (a 76-residue protein attached to proteins as an intracellular targeting signal).. Its function is as follows. Proteasome-associated deubiquitinase which releases ubiquitin from the proteasome targeted ubiquitinated proteins. Ensures the regeneration of ubiquitin at the proteasome. This chain is Ubiquitin carboxyl-terminal hydrolase 14 (usp-14), found in Caenorhabditis elegans.